The chain runs to 828 residues: Beta-galactosidase 13 (828 aa).

An N-terminal signal peptide occupies residues 1-23 (MKTTMAAAATCLVALLVVVLAEA). N-linked (GlcNAc...) asparagine glycosylation is present at asparagine 157. Glutamate 187 acts as the Proton donor in catalysis. 2 N-linked (GlcNAc...) asparagine glycosylation sites follow: asparagine 198 and asparagine 249. The Nucleophile role is filled by glutamate 259. Asparagine 260, asparagine 362, asparagine 366, asparagine 392, asparagine 502, asparagine 578, asparagine 586, and asparagine 615 each carry an N-linked (GlcNAc...) asparagine glycan. Residues 746–828 (AEVGDAITLS…SGVLTVQASC (83 aa)) form the SUEL-type lectin domain.

This sequence belongs to the glycosyl hydrolase 35 family.

The protein resides in the secreted. The protein localises to the extracellular space. It is found in the apoplast. It carries out the reaction Hydrolysis of terminal non-reducing beta-D-galactose residues in beta-D-galactosides.. This chain is Beta-galactosidase 13, found in Oryza sativa subsp. japonica (Rice).